A 454-amino-acid chain; its full sequence is Phenylalanine--tRNA ligase, mitochondrial (454 aa).

Substrate is bound by residues 141–144 (SAHQ), R163, 170–172 (VHY), 177–179 (QME), E266, and F291. Residues 327–347 (KSISTSSSSSSSSSSSSSSTL) form a disordered region. The span at 328–347 (SISTSSSSSSSSSSSSSSTL) shows a compositional bias: low complexity. Residues 361–454 (SKYPSCFKDV…LENHLSVKLR (94 aa)) form the FDX-ACB domain.

The protein belongs to the class-II aminoacyl-tRNA synthetase family. Monomer.

It is found in the mitochondrion matrix. The catalysed reaction is tRNA(Phe) + L-phenylalanine + ATP = L-phenylalanyl-tRNA(Phe) + AMP + diphosphate + H(+). Functionally, is responsible for the charging of tRNA(Phe) with phenylalanine in mitochondrial translation. This Dictyostelium discoideum (Social amoeba) protein is Phenylalanine--tRNA ligase, mitochondrial (mpheS).